The sequence spans 561 residues: MNDEGDLAQEDTTKDEANSTEGSRVNKLKRTRRKVTKPHLCSADGDEITMANSREMSRNQTADLSKPGSAESWSWHNAKDAQDQIPVVKSSLPSAGAPDAEFNPNTDHTRDNAQSLILPQLSSRMKHIKQEMAKNHLQFVRFEATDLHGVSRSKSIPAQFFQEKVIHGVFMPRGYLELMPNPKDNEVNHIRATCFNSDIVLMPELSTFRVLPWAERTARVICDTFTVTGEPLLTSPRYIAKRQLRQLQDAGFSLLSAFIYDFCIFGVPEVINSKTISFPASTLLSNHDQPFMQELVDGLYHTGANVESFSSSTRPGQMEICFLPEFGISSADNAFTLRTGVQEVARRYNYIASLVIETGFCNSGILSHSIWDVSGKTNMFYSGSGVERLTLTGKKWLAGLLKHSAALSCLMAPAVNCRKRYCKDSRDLKDSVPTTWGYNDNSCALNVKCHGEKGTQIENKLGSATANPYLVLAATVAAGLDGLQSSDGAAAESDESQDLYQPEPSEIPLKMEDALAALEQDECLKQALGETFIRYFVAMKKYELENEETDAEGNKFLEYFI.

Disordered stretches follow at residues 1-78 (MNDE…WHNA) and 91-112 (SLPS…TRDN). The segment covering 26–37 (NKLKRTRRKVTK) has biased composition (basic residues). The segment covering 50–63 (MANSREMSRNQTAD) has biased composition (polar residues). The GS beta-grasp domain occupies 135–229 (NHLQFVRFEA…VICDTFTVTG (95 aa)). The 326-residue stretch at 236 to 561 (PRYIAKRQLR…EGNKFLEYFI (326 aa)) folds into the GS catalytic domain.

This sequence belongs to the glutamine synthetase family. As to quaternary structure, dodecamer. Interacts with BFSP2 and VIM. In terms of tissue distribution, expressed in lens.

Its function is as follows. May act as a component of the cytoskeleton or as a chaperone for the reorganization of intermediate filament proteins during terminal differentiation in the lens. Does not seem to have enzymatic activity. This chain is Lengsin (Lgsn), found in Rattus norvegicus (Rat).